A 224-amino-acid chain; its full sequence is Large ribosomal subunit protein uL1 (224 aa).

It belongs to the universal ribosomal protein uL1 family. In terms of assembly, part of the 50S ribosomal subunit.

Binds directly to 23S rRNA. The L1 stalk is quite mobile in the ribosome, and is involved in E site tRNA release. In terms of biological role, protein L1 is also a translational repressor protein, it controls the translation of the L11 operon by binding to its mRNA. The chain is Large ribosomal subunit protein uL1 from Borrelia hermsii (strain HS1 / DAH).